Consider the following 750-residue polypeptide: Iron-sulfur clusters transporter ATM1, mitochondrial (750 aa).

The N-terminal 16 residues, 1–16 (MFIRNVKLIKPSPVRF), are a transit peptide targeting the mitochondrion. Topologically, residues 17–124 (ISPIPFSFPI…PKNNLNFKIR (108 aa)) are mitochondrial matrix. 2 stretches are compositionally biased toward low complexity: residues 43–75 (TSNF…KTLS) and 87–100 (DNDT…SSEN). The disordered stretch occupies residues 43 to 100 (TSNFKSTSSSSSLKSTSTSTSTSTSKTTPKTLSKPPPKVKPPIQDNDTTSSGSSSSEN). A helical transmembrane segment spans residues 125–146 (VIIALSLLVGAKILNVQVPFYF). Residues 125 to 415 (VIIALSLLVG…LGSVYRELKQ (291 aa)) form the ABC transmembrane type-1 domain. Over 147-169 (KQIIDTMNIDWTNEVGVFSTVIG) the chain is Mitochondrial intermembrane. The helical transmembrane segment at 170–193 (SLILAYGGARFGAVLFGELRNAIF) threads the bilayer. Over 194 to 242 (ASVAQSAIRRVAYNTFVKLLNMDLQFHLSRQTGGLTRAIDRGTKGISYV) the chain is Mitochondrial matrix. The chain crosses the membrane as a helical span at residues 243-266 (LSAMVFHIIPITLEISIVCGILTY). Position 267 (Asn267) is a topological domain, mitochondrial intermembrane. The chain crosses the membrane as a helical span at residues 268–288 (YGASFAAMTFVTMLAYSIFTI). Over 289-354 (QTTAWRTKFR…SSVKIATSLA (66 aa)) the chain is Mitochondrial matrix. Glutathione-binding positions include 294–298 (RTKFR) and 357–360 (NSGQ). Residues 355-373 (FLNSGQNFIFTSALTAMMY) traverse the membrane as a helical segment. The Mitochondrial intermembrane segment spans residues 374–388 (MGCQGVYTGELTVGD). A helical membrane pass occupies residues 389–410 (LVLINQLVFQLSVPLNFLGSVY). Gly407 serves as a coordination point for glutathione. Topologically, residues 411–750 (RELKQSLLDM…LFNSQTFEKK (340 aa)) are mitochondrial matrix. Residues 437–462 (PNAPPLKLNNNNNNNNNNNNNNNNSL) form a disordered region. The span at 445–460 (NNNNNNNNNNNNNNNN) shows a compositional bias: low complexity. The ABC transporter domain maps to 466 to 702 (IRFENVSFGY…QPNSLYAQLW (237 aa)). Residues Tyr475 and 499 to 510 (GPSGSGKSTILR) contribute to the ATP site.

It belongs to the ABC transporter superfamily. ABCB family. Heavy Metal importer (TC 3.A.1.210) subfamily. Homodimer.

Its subcellular location is the mitochondrion inner membrane. In terms of biological role, performs an essential function in the generation of cytoplasmic iron-sulfur proteins by mediating the ATP-dependent export of Fe/S cluster precursors synthesized by NFS1 and other mitochondrial proteins. Hydrolyzes ATP. Binds glutathione and may function by transporting a glutathione-conjugated iron-sulfur compound. This chain is Iron-sulfur clusters transporter ATM1, mitochondrial, found in Candida albicans (strain SC5314 / ATCC MYA-2876) (Yeast).